The chain runs to 235 residues: Phosphoribosylaminoimidazole-succinocarboxamide synthase (235 aa).

This sequence belongs to the SAICAR synthetase family.

It catalyses the reaction 5-amino-1-(5-phospho-D-ribosyl)imidazole-4-carboxylate + L-aspartate + ATP = (2S)-2-[5-amino-1-(5-phospho-beta-D-ribosyl)imidazole-4-carboxamido]succinate + ADP + phosphate + 2 H(+). Its pathway is purine metabolism; IMP biosynthesis via de novo pathway; 5-amino-1-(5-phospho-D-ribosyl)imidazole-4-carboxamide from 5-amino-1-(5-phospho-D-ribosyl)imidazole-4-carboxylate: step 1/2. The sequence is that of Phosphoribosylaminoimidazole-succinocarboxamide synthase from Streptococcus pneumoniae serotype 2 (strain D39 / NCTC 7466).